The chain runs to 394 residues: 1-deoxy-D-xylulose 5-phosphate reductoisomerase (394 aa).

Residues Thr-12, Gly-13, Ser-14, Ile-15, Lys-39, Gln-40, and Asn-126 each contribute to the NADPH site. Lys-127 serves as a coordination point for 1-deoxy-D-xylulose 5-phosphate. Glu-128 contributes to the NADPH binding site. Asp-152 serves as a coordination point for Mn(2+). 1-deoxy-D-xylulose 5-phosphate-binding residues include Ser-153, Glu-154, Ser-183, and His-206. Glu-154 lines the Mn(2+) pocket. Gly-212 contributes to the NADPH binding site. Positions 219, 224, 225, and 228 each coordinate 1-deoxy-D-xylulose 5-phosphate. Glu-228 serves as a coordination point for Mn(2+).

This sequence belongs to the DXR family. Mg(2+) serves as cofactor. It depends on Mn(2+) as a cofactor.

It catalyses the reaction 2-C-methyl-D-erythritol 4-phosphate + NADP(+) = 1-deoxy-D-xylulose 5-phosphate + NADPH + H(+). Its pathway is isoprenoid biosynthesis; isopentenyl diphosphate biosynthesis via DXP pathway; isopentenyl diphosphate from 1-deoxy-D-xylulose 5-phosphate: step 1/6. Catalyzes the NADPH-dependent rearrangement and reduction of 1-deoxy-D-xylulose-5-phosphate (DXP) to 2-C-methyl-D-erythritol 4-phosphate (MEP). This chain is 1-deoxy-D-xylulose 5-phosphate reductoisomerase, found in Neisseria meningitidis serogroup A / serotype 4A (strain DSM 15465 / Z2491).